A 389-amino-acid chain; its full sequence is Phenylpropanoylacetyl-CoA synthase (389 aa).

Residue Cys163 is part of the active site.

This sequence belongs to the thiolase-like superfamily. Chalcone/stilbene synthases family. In terms of assembly, homodimer. Expressed in both the leaf and rhizome, with higher expression in the rhizome.

The enzyme catalyses (E)-feruloyl-CoA + malonyl-CoA + H(+) = (E)-feruloylacetyl-CoA + CO2 + CoA. It catalyses the reaction 4-coumaroyl-CoA + malonyl-CoA + H(+) = (4-coumaroyl)acetyl-CoA + CO2 + CoA. The protein operates within secondary metabolite biosynthesis; flavonoid biosynthesis. Functionally, catalyzes the formation of feruloyldiketide-CoA by condensing feruloyl-CoA and malonyl-CoA in the curcuminoid biosynthesis. Has no activity with cinnamoyl-CoA. The chain is Phenylpropanoylacetyl-CoA synthase (DCS) from Curcuma longa (Turmeric).